The sequence spans 148 residues: Lipoprotein MlpH (148 aa).

The first 17 residues, 1–17 (MKIINILFCLFLLMLNG), serve as a signal peptide directing secretion. C18 carries the N-palmitoyl cysteine lipid modification. C18 is lipidated: S-diacylglycerol cysteine. A disordered region spans residues 26–61 (LKNNAQQTKSRRKRDLTQKEVTQEKPKSKEELLREK). Residues 40–61 (DLTQKEVTQEKPKSKEELLREK) are compositionally biased toward basic and acidic residues.

This sequence belongs to the Multicopy lipoprotein (Mlp) family.

The protein localises to the cell outer membrane. An outer membrane protein that may participate in pathogenesis. Some human Lyme disease patients have antibodies against this protein. The Mlp proteins probably undergo intragenic recombination, generating new alleles. This is Lipoprotein MlpH from Borreliella burgdorferi (strain ATCC 35210 / DSM 4680 / CIP 102532 / B31) (Borrelia burgdorferi).